Consider the following 259-residue polypeptide: Ribosomal RNA large subunit methyltransferase E (259 aa).

5 residues coordinate S-adenosyl-L-methionine: glycine 49, tryptophan 51, aspartate 69, aspartate 88, and aspartate 112. The active-site Proton acceptor is the lysine 152. One can recognise a TRAM domain in the interval 199 to 257 (PIAEGDEHTVEIVDTGDEGDGIARIEGYTLFVDDAAEGDTVDVTVTDLKPNYGFAERRD).

The protein belongs to the class I-like SAM-binding methyltransferase superfamily. RNA methyltransferase RlmE family.

The protein resides in the cytoplasm. The enzyme catalyses uridine(2552) in 23S rRNA + S-adenosyl-L-methionine = 2'-O-methyluridine(2552) in 23S rRNA + S-adenosyl-L-homocysteine + H(+). Functionally, specifically methylates the uridine in position 2552 of 23S rRNA at the 2'-O position of the ribose in the fully assembled 50S ribosomal subunit. The polypeptide is Ribosomal RNA large subunit methyltransferase E (Halobacterium salinarum (strain ATCC 29341 / DSM 671 / R1)).